Reading from the N-terminus, the 52-residue chain is Phospholamban (52 aa).

N-acetylmethionine is present on M1. Over 1–31 (MEKVQYLTRSAIRRASTIEMPQQARQKLQNL) the chain is Cytoplasmic. At S16 the chain carries Phosphoserine; by PKA and DMPK. The tract at residues 16–22 (STIEMPQ) is involved in HAX1 binding. T17 is modified (phosphothreonine; by CaMK2). A helical transmembrane segment spans residues 32–52 (FINFCLILICLLLICIIVMLL). A lipid anchor (S-palmitoyl cysteine) is attached at C36.

The protein belongs to the phospholamban family. As to quaternary structure, homopentamer. Can also form heterooligomers with other sarcoplasmic/endoplasmic reticulum calcium ATPase (SERCA) regulators ARLN, ERLN, SLN and STRIT1/DWORF. Monomer. Interacts with HAX1. Interacts as a monomer with ATP2A2; the interaction decreases ATP2A2 Ca(2+) affinity. Interacts with VMP1; VMP1 competes with PLN and SLN to prevent them from forming an inhibitory complex with ATP2A2. Interacts with S100A1 in a Ca(2+)-dependent manner. In terms of processing, phosphorylation by PKA abolishes the inhibition of ATP2A2-mediated calcium uptake. Phosphorylated at Thr-17 by CaMK2, and in response to beta-adrenergic stimulation. Phosphorylation by DMPK may stimulate sarcoplasmic reticulum calcium uptake in cardiomyocytes. Post-translationally, palmitoylated by ZDHHC16, promoting formation of the homopentamer. In elongated spermatids, proteolytically cleaved by SPPL2C which modulates intracellular Ca(2+) homeostasis. In terms of tissue distribution, heart muscle (at protein level).

The protein localises to the endoplasmic reticulum membrane. The protein resides in the sarcoplasmic reticulum membrane. It is found in the mitochondrion membrane. It localises to the membrane. In terms of biological role, reversibly inhibits the activity of ATP2A2/SERCA2 in cardiac sarcoplasmic reticulum by decreasing the apparent affinity of the ATPase for Ca(2+). Binds preferentially to the ATP-bound E1 conformational form of ATP2A2 which predominates at low Ca(2+) concentrations during the diastolic phase of the cardiac cycle. Inhibits ATP2A2 Ca(2+) affinity by disrupting its allosteric activation by ATP. Modulates the contractility of the heart muscle in response to physiological stimuli via its effects on ATP2A2. Modulates calcium re-uptake during muscle relaxation and plays an important role in calcium homeostasis in the heart muscle. The degree of ATP2A2 inhibition depends on the oligomeric state of PLN. ATP2A2 inhibition is alleviated by PLN phosphorylation. Also inhibits the activity of ATP2A3/SERCA3. Controls intracellular Ca(2+) levels in elongated spermatids and may play a role in germ cell differentiation. In the thalamic reticular nucleus of the brain, plays a role in the regulation of sleep patterns and executive functioning. The polypeptide is Phospholamban (Homo sapiens (Human)).